An 897-amino-acid polypeptide reads, in one-letter code: Cytokine receptor common subunit beta (897 aa).

Residues 1–16 (MVLAQGLLSMALLALC) form the signal peptide. The Extracellular portion of the chain corresponds to 17–443 (WERSLAGAEE…WDTESVLPMW (427 aa)). A disulfide bridge links Cys-35 with Cys-45. The N-linked (GlcNAc...) asparagine glycan is linked to Asn-58. Cystine bridges form between Cys-75/Cys-96 and Cys-86/Cys-91. The 108-residue stretch at 133–240 (PPEPRDLQIS…PEVCWDSQPG (108 aa)) folds into the Fibronectin type-III 1 domain. Asn-191 carries N-linked (GlcNAc...) asparagine glycosylation. 2 cysteine pairs are disulfide-bonded: Cys-250–Cys-260 and Cys-289–Cys-306. Positions 339–436 (QMAPPSLNVT…EWSEARSWDT (98 aa)) constitute a Fibronectin type-III 2 domain. N-linked (GlcNAc...) asparagine glycosylation is present at Asn-346. The WSXWS motif motif lies at 425–429 (WSEWS). Residues 444–460 (VLALIVIFLTIAVLLAL) traverse the membrane as a helical segment. The Cytoplasmic segment spans residues 461–897 (RFCGIYGYRL…WEVNKPGEVC (437 aa)). Residues 474–482 (WEEKIPNPS) carry the Box 1 motif motif. Disordered regions lie at residues 498 to 517 (GSMS…WGSR), 532 to 630 (SEVS…EYLC), 648 to 812 (PGQA…QPEG), and 830 to 849 (PGPL…PEIK). Residues 564 to 574 (EQPPSPQPGPP) show a composition bias toward pro residues. Low complexity predominate over residues 723–752 (SGASSVSLVPSLGLPSDQTPSLCPGLASGP). The residue at position 766 (Tyr-766) is a Phosphotyrosine. The span at 830–840 (PGPLSLRSKPS) shows a compositional bias: low complexity.

This sequence belongs to the type I cytokine receptor family. Type 4 subfamily. In terms of assembly, heterodimer of an alpha and a beta subunit. The beta subunit is common to the IL3, IL5 and GM-CSF receptors. The signaling GM-CSF receptor complex is a dodecamer of two head-to-head hexamers of two alpha, two beta, and two ligand subunits. Interacts with TMEM102; this interaction occurs preferentially in the absence of CSF2. Interacts with FCER1G; this interaction is direct. Interacts with LYN. Interacts with JAK1. May be phosphorylated by LYN.

Its subcellular location is the membrane. In terms of biological role, cell surface receptor that plays a role in immune response and controls the production and differentiation of hematopoietic progenitor cells into lineage-restricted cells. Acts by forming an heterodimeric receptor through interaction with different partners such as IL3RA, IL5RA or CSF2RA. In turn, participates in various signaling pathways including interleukin-3, interleukin-5 and granulocyte-macrophage colony-stimulating factor/CSF2 pathways. In unstimulated conditions, interacts constitutively with JAK1 and ligand binding leads to JAK1 stimulation and subsequent activation of the JAK-STAT pathway. This Homo sapiens (Human) protein is Cytokine receptor common subunit beta (CSF2RB).